The sequence spans 267 residues: Palmitoyltransferase ZDHHC12 (267 aa).

Residues 1 to 9 (MAPWALLSP) lie on the Cytoplasmic side of the membrane. The helical transmembrane segment at 10–30 (GVLVRTGHTVLTWGITLVLFL) threads the bilayer. At 31-43 (HDTELRQWEEQGE) the chain is on the lumenal side. Residues 44-64 (LLLPLTFLLLVLGSLLLYLAV) form a helical membrane-spanning segment. Over 65-140 (SLMDPGYVNV…ENCVGERNHP (76 aa)) the chain is Cytoplasmic. The 51-residue stretch at 97 to 147 (RRCRYCLVLQPLRARHCRECRRCVRRYDHHCPWMENCVGERNHPLFVVYLA) folds into the DHHC domain. The S-palmitoyl cysteine intermediate role is filled by Cys127. A helical membrane pass occupies residues 141 to 161 (LFVVYLALQLVVLLWGLYLAW). Topologically, residues 162 to 178 (SGLRFFQPWGQWLRSSG) are lumenal. The chain crosses the membrane as a helical span at residues 179–199 (LLFATFLLLSLFSLVASLLLV). The Cytoplasmic segment spans residues 200-267 (SHLYLVASNT…EEEEGSSPAV (68 aa)).

It belongs to the DHHC palmitoyltransferase family. In terms of tissue distribution, widely expressed.

It localises to the golgi apparatus membrane. The protein resides in the endoplasmic reticulum membrane. The enzyme catalyses L-cysteinyl-[protein] + hexadecanoyl-CoA = S-hexadecanoyl-L-cysteinyl-[protein] + CoA. Functionally, palmitoyltransferase that catalyzes the addition of palmitate onto various protein substrates. Has a palmitoyltransferase activity toward gephyrin/GPHN, regulating its clustering at synapses and its function in gamma-aminobutyric acid receptor clustering. Thereby, indirectly regulates GABAergic synaptic transmission. Negatively regulates NLRP3-driven inflammation. Catalyzes NLRP3 palmitoylation, leading to its degradation via the chaperone-mediated autophagy (CMA) process. The chain is Palmitoyltransferase ZDHHC12 from Homo sapiens (Human).